A 263-amino-acid chain; its full sequence is 3'-5' ssDNA/RNA exonuclease TatD (263 aa).

Residues Glu-91, His-127, and His-152 each contribute to the a divalent metal cation site.

This sequence belongs to the metallo-dependent hydrolases superfamily. TatD-type hydrolase family. TatD subfamily. As to quaternary structure, monomer. Requires Mg(2+) as cofactor.

The protein localises to the cytoplasm. 3'-5' exonuclease that prefers single-stranded DNA and RNA. May play a role in the H(2)O(2)-induced DNA damage repair. The chain is 3'-5' ssDNA/RNA exonuclease TatD from Cronobacter sakazakii (strain ATCC BAA-894) (Enterobacter sakazakii).